A 131-amino-acid chain; its full sequence is Small ribosomal subunit protein uS12 (131 aa).

D89 is subject to 3-methylthioaspartic acid.

The protein belongs to the universal ribosomal protein uS12 family. In terms of assembly, part of the 30S ribosomal subunit. Contacts proteins S8 and S17. May interact with IF1 in the 30S initiation complex.

In terms of biological role, with S4 and S5 plays an important role in translational accuracy. Interacts with and stabilizes bases of the 16S rRNA that are involved in tRNA selection in the A site and with the mRNA backbone. Located at the interface of the 30S and 50S subunits, it traverses the body of the 30S subunit contacting proteins on the other side and probably holding the rRNA structure together. The combined cluster of proteins S8, S12 and S17 appears to hold together the shoulder and platform of the 30S subunit. The protein is Small ribosomal subunit protein uS12 of Karelsulcia muelleri (strain GWSS) (Sulcia muelleri).